Here is a 508-residue protein sequence, read N- to C-terminus: Photosystem II CP47 reaction center protein (508 aa).

6 helical membrane-spanning segments follow: residues 21 to 36, 101 to 115, 140 to 156, 203 to 218, 237 to 252, and 457 to 472; these read SVHI…WAGS, IVFS…IWHW, GIHL…FGAF, IAAG…FHLS, VLSS…AFVV, and SFAL…HGAR.

Belongs to the PsbB/PsbC family. PsbB subfamily. In terms of assembly, PSII is composed of 1 copy each of membrane proteins PsbA, PsbB, PsbC, PsbD, PsbE, PsbF, PsbH, PsbI, PsbJ, PsbK, PsbL, PsbM, PsbT, PsbX, PsbY, PsbZ, Psb30/Ycf12, at least 3 peripheral proteins of the oxygen-evolving complex and a large number of cofactors. It forms dimeric complexes. It depends on Binds multiple chlorophylls. PSII binds additional chlorophylls, carotenoids and specific lipids. as a cofactor.

It is found in the plastid. The protein localises to the chloroplast thylakoid membrane. Its function is as follows. One of the components of the core complex of photosystem II (PSII). It binds chlorophyll and helps catalyze the primary light-induced photochemical processes of PSII. PSII is a light-driven water:plastoquinone oxidoreductase, using light energy to abstract electrons from H(2)O, generating O(2) and a proton gradient subsequently used for ATP formation. The polypeptide is Photosystem II CP47 reaction center protein (Nymphaea alba (White water-lily)).